The sequence spans 296 residues: HTH-type transcriptional regulator GltR (296 aa).

One can recognise an HTH lysR-type domain in the interval 1-58 (MNIQLLQVFLTTAREGSISKAALTLNYAQSNVTNKIQQLENDLQTKLFYRHSRGITLT). A DNA-binding region (H-T-H motif) is located at residues 18–37 (ISKAALTLNYAQSNVTNKIQ).

The protein belongs to the LysR transcriptional regulatory family.

Its function is as follows. Positive regulator of glutamate biosynthesis (gltAB genes). Negatively regulates its own expression. In Bacillus subtilis (strain 168), this protein is HTH-type transcriptional regulator GltR (gltR).